A 233-amino-acid chain; its full sequence is Phytol kinase (233 aa).

A run of 6 helical transmembrane segments spans residues 9–29 (MALPLWIAVGLAATYLGAVVL), 56–76 (VVLIAWWLSIPGWVGAIAGVF), 96–118 (VGRHSYGTLFYALSIGLLVGGFF), 122–144 (LPIFAAIGILVMAWGDGLAALVG), 172–192 (FLVTVVFLSYTFGFTVIVLVV), and 213–233 (NLTVPLGSALIAWAGSYLWLG).

The protein belongs to the polyprenol kinase family.

The protein localises to the cell membrane. The catalysed reaction is phytol + CTP = phytyl phosphate + CDP + H(+). It participates in cofactor biosynthesis; tocopherol biosynthesis. Functionally, catalyzes the CTP-dependent phosphorylation of phytol to phytylmonophosphate (PMP). Can also use UTP as an alternative phosphate donor, but not ATP or GTP. Is involved in tocopherol biosynthesis, via the utilization of phytol generated by chlorophyll degradation. Also plays a significant but not critical role in the recycling of phytol for the biosynthesis of new chlorophyll molecules. This is Phytol kinase from Synechocystis sp. (strain ATCC 27184 / PCC 6803 / Kazusa).